Here is a 437-residue protein sequence, read N- to C-terminus: Phosphomethylpyrimidine synthase (437 aa).

Residues asparagine 69, methionine 98, tyrosine 127, histidine 163, 185–187 (SRG), 226–229 (DACR), and glutamate 265 contribute to the substrate site. Residue histidine 269 participates in Zn(2+) binding. Tyrosine 292 serves as a coordination point for substrate. Zn(2+) is bound at residue histidine 333. [4Fe-4S] cluster is bound by residues cysteine 409, cysteine 412, and cysteine 416.

It belongs to the ThiC family. It depends on [4Fe-4S] cluster as a cofactor.

The catalysed reaction is 5-amino-1-(5-phospho-beta-D-ribosyl)imidazole + S-adenosyl-L-methionine = 4-amino-2-methyl-5-(phosphooxymethyl)pyrimidine + CO + 5'-deoxyadenosine + formate + L-methionine + 3 H(+). It participates in cofactor biosynthesis; thiamine diphosphate biosynthesis. In terms of biological role, catalyzes the synthesis of the hydroxymethylpyrimidine phosphate (HMP-P) moiety of thiamine from aminoimidazole ribotide (AIR) in a radical S-adenosyl-L-methionine (SAM)-dependent reaction. This is Phosphomethylpyrimidine synthase from Alkaliphilus metalliredigens (strain QYMF).